The primary structure comprises 141 residues: MEKNTTSSCIFCDIVQGSITSYKIGENEHAIAFLDAFPVADGHTLVIPKKHAVDFSSTDQKELQAVSLLAKQIALKLKMTLKPSGLNYVSNEGAIAGQVVFHFHLHIVPKYETGKGFGYNVNKTNKRSLEENYQLISESKN.

The 108-residue stretch at 10 to 117 (IFCDIVQGSI…VPKYETGKGF (108 aa)) folds into the HIT domain. The Histidine triad motif signature appears at 102 to 106 (HFHLH).

This is an uncharacterized protein from Mycoplasma genitalium (strain ATCC 33530 / DSM 19775 / NCTC 10195 / G37) (Mycoplasmoides genitalium).